We begin with the raw amino-acid sequence, 172 residues long: Translocon-associated protein subunit delta (172 aa).

Positions Met-1–Ala-24 are cleaved as a signal peptide. The cysteines at positions 25 and 56 are disulfide-linked. Residues Cys-25–Gly-143 lie on the Lumenal side of the membrane. A Glycyl lysine isopeptide (Lys-Gly) (interchain with G-Cter in ubiquitin) cross-link involves residue Lys-72. Residues Pro-144–Phe-164 traverse the membrane as a helical segment. The Cytoplasmic portion of the chain corresponds to Ser-165 to Ala-172.

Belongs to the TRAP-delta family. As to quaternary structure, heterotetramer of TRAP-alpha, TRAP-beta, TRAP-delta and TRAP-gamma.

The protein resides in the endoplasmic reticulum membrane. TRAP proteins are part of a complex whose function is to bind calcium to the ER membrane and thereby regulate the retention of ER resident proteins. The sequence is that of Translocon-associated protein subunit delta (SSR4) from Bos taurus (Bovine).